We begin with the raw amino-acid sequence, 117 residues long: Gamma-aminobutyric acid receptor-associated protein-like 2 (117 aa).

Residue Lys24 is modified to N6-acetyllysine. Phosphoserine is present on residues Ser39, Ser87, and Ser88. Gly116 carries Phosphatidylethanolamine amidated glycine; alternate lipidation. Gly116 carries the Phosphatidylserine amidated glycine; alternate lipid modification. A propeptide (removed in mature form) is located at residue Phe117.

This sequence belongs to the ATG8 family. As to quaternary structure, monomer. Interacts with ATG3, ATG7, ATG13 and ULK1. Interacts with TP53INP1 and TP53INP2. Interacts with TBC1D25. Directly interacts with SQSTM1 and BNIP3. Interacts with TECPR2 and PCM1. Interacts with TBC1D5. Interacts with TRIM5. Interacts with MEFV and TRIM21. Interacts with WDFY3. Interacts with UBA5; promoting recruitment of UBA5 to the endoplasmic reticulum membrane. Interacts with GOSR1. Interacts with KBTBD6 and KBTBD7; the interaction is direct. Interacts with reticulophagy regulators RETREG1, RETREG2 and RETREG3. Interacts with IRGM. Interacts with DNM2. Interacts with NCOA4. Interacts with IRGQ. Post-translationally, the precursor molecule is cleaved by ATG4 (ATG4A, ATG4B, ATG4C or ATG4D) to expose the glycine at the C-terminus and form the cytosolic form, GABARAPL2-I. The processed form is then activated by APG7L/ATG7, transferred to ATG3 and conjugated to phosphatidylethanolamine (PE) phospholipid to form the membrane-bound form, GABARAPL2-II. During non-canonical autophagy, the processed form is conjugated to phosphatidylserine (PS) phospholipid. ATG4 proteins also mediate the delipidation of PE-conjugated forms required for GABARAPL2 recycling when autophagosomes fuse with lysosomes. In addition, ATG4B and ATG4D mediate delipidation of ATG8 proteins conjugated to PS during non-canonical autophagy. ATG4B constitutes the major protein for proteolytic activation. ATG4D is the main enzyme for delipidation activity. In terms of processing, phosphorylation at Ser-87 and Ser-88 by TBK1 prevents interaction with ATG4 (ATG4A, ATG4B, ATG4C or ATG4D). Phosphorylation by TBK1 on autophagosomes prevents their delipidation by ATG4 and premature removal from nascent autophagosomes. As to expression, ubiquitous. Expressed at high levels in the brain, heart, prostate, ovary, spleen and skeletal muscle. Expressed at very low levels in lung, thymus and small intestine.

The protein resides in the cytoplasmic vesicle. Its subcellular location is the autophagosome. It localises to the endoplasmic reticulum membrane. The protein localises to the golgi apparatus. Its function is as follows. Ubiquitin-like modifier involved in intra-Golgi traffic. Modulates intra-Golgi transport through coupling between NSF activity and SNAREs activation. It first stimulates the ATPase activity of NSF which in turn stimulates the association with GOSR1. Involved in autophagy. Plays a role in mitophagy which contributes to regulate mitochondrial quantity and quality by eliminating the mitochondria to a basal level to fulfill cellular energy requirements and preventing excess ROS production. Whereas LC3s are involved in elongation of the phagophore membrane, the GABARAP/GATE-16 subfamily is essential for a later stage in autophagosome maturation. This Bos taurus (Bovine) protein is Gamma-aminobutyric acid receptor-associated protein-like 2.